Consider the following 389-residue polypeptide: Nuclear receptor subfamily 2 group F member 1-B (389 aa).

The segment at 19–39 is disordered; the sequence is DDQSAAGREHLQHRHSPKSAE. Residues 51–126 constitute a DNA-binding region (nuclear receptor); that stretch reads HVECVVCGDK…VGMRREAVQR (76 aa). NR C4-type zinc fingers lie at residues 54–74 and 90–109; these read CVVC…CEGC and CRAN…CQYC. The NR LBD domain maps to 152 to 378; the sequence is YLSGYISLLL…TLIRDMLLSG (227 aa).

It belongs to the nuclear hormone receptor family. NR2 subfamily. In terms of tissue distribution, expressed the retina, where expression is restricted to the outer nuclear layer.

It is found in the nucleus. Putative transcription factor that is required in photoreceptor cells precursors during eye development. This is Nuclear receptor subfamily 2 group F member 1-B from Danio rerio (Zebrafish).